The chain runs to 107 residues: Defensin-like protein 242 (107 aa).

Residues 1 to 22 (MKVVAIFLASCVLFSLIPTHLS) form the signal peptide. Intrachain disulfides connect C45–C100, C55–C84, C65–C94, and C82–C96.

Belongs to the DEFL family.

It is found in the secreted. The protein is Defensin-like protein 242 (SCRL10) of Arabidopsis thaliana (Mouse-ear cress).